Reading from the N-terminus, the 337-residue chain is Ketol-acid reductoisomerase (NADP(+)) (337 aa).

The KARI N-terminal Rossmann domain occupies 1 to 180; it reads MQVYYDKDAD…GGTKGGVIET (180 aa). NADP(+)-binding positions include 24–27, arginine 47, and serine 51; that span reads YGSQ. Histidine 106 is an active-site residue. Glycine 132 serves as a coordination point for NADP(+). In terms of domain architecture, KARI C-terminal knotted spans 181-326; that stretch reads TFREETETDL…AQLRAMMPWI (146 aa). Mg(2+) is bound by residues aspartate 189, glutamate 193, glutamate 225, and glutamate 229. A substrate-binding site is contributed by serine 250.

The protein belongs to the ketol-acid reductoisomerase family. It depends on Mg(2+) as a cofactor.

It carries out the reaction (2R)-2,3-dihydroxy-3-methylbutanoate + NADP(+) = (2S)-2-acetolactate + NADPH + H(+). The catalysed reaction is (2R,3R)-2,3-dihydroxy-3-methylpentanoate + NADP(+) = (S)-2-ethyl-2-hydroxy-3-oxobutanoate + NADPH + H(+). It participates in amino-acid biosynthesis; L-isoleucine biosynthesis; L-isoleucine from 2-oxobutanoate: step 2/4. The protein operates within amino-acid biosynthesis; L-valine biosynthesis; L-valine from pyruvate: step 2/4. Involved in the biosynthesis of branched-chain amino acids (BCAA). Catalyzes an alkyl-migration followed by a ketol-acid reduction of (S)-2-acetolactate (S2AL) to yield (R)-2,3-dihydroxy-isovalerate. In the isomerase reaction, S2AL is rearranged via a Mg-dependent methyl migration to produce 3-hydroxy-3-methyl-2-ketobutyrate (HMKB). In the reductase reaction, this 2-ketoacid undergoes a metal-dependent reduction by NADPH to yield (R)-2,3-dihydroxy-isovalerate. The chain is Ketol-acid reductoisomerase (NADP(+)) from Neisseria meningitidis serogroup C (strain 053442).